A 357-amino-acid polypeptide reads, in one-letter code: Dual-specificity RNA methyltransferase RlmN (357 aa).

Catalysis depends on E89, which acts as the Proton acceptor. In terms of domain architecture, Radical SAM core spans 109–340; that stretch reads EGEKYTVCVS…CTIRESKALD (232 aa). An intrachain disulfide couples C116 to C345. C123, C127, and C130 together coordinate [4Fe-4S] cluster. S-adenosyl-L-methionine contacts are provided by residues 173–174, S203, 226–228, and N302; these read GE and SLH. C345 acts as the S-methylcysteine intermediate in catalysis.

This sequence belongs to the radical SAM superfamily. RlmN family. [4Fe-4S] cluster serves as cofactor.

It localises to the cytoplasm. It carries out the reaction adenosine(2503) in 23S rRNA + 2 reduced [2Fe-2S]-[ferredoxin] + 2 S-adenosyl-L-methionine = 2-methyladenosine(2503) in 23S rRNA + 5'-deoxyadenosine + L-methionine + 2 oxidized [2Fe-2S]-[ferredoxin] + S-adenosyl-L-homocysteine. It catalyses the reaction adenosine(37) in tRNA + 2 reduced [2Fe-2S]-[ferredoxin] + 2 S-adenosyl-L-methionine = 2-methyladenosine(37) in tRNA + 5'-deoxyadenosine + L-methionine + 2 oxidized [2Fe-2S]-[ferredoxin] + S-adenosyl-L-homocysteine. Its function is as follows. Specifically methylates position 2 of adenine 2503 in 23S rRNA and position 2 of adenine 37 in tRNAs. m2A2503 modification seems to play a crucial role in the proofreading step occurring at the peptidyl transferase center and thus would serve to optimize ribosomal fidelity. The sequence is that of Dual-specificity RNA methyltransferase RlmN from Helicobacter pylori (strain J99 / ATCC 700824) (Campylobacter pylori J99).